We begin with the raw amino-acid sequence, 82 residues long: Sulfur carrier protein TusA (82 aa).

Residue C17 is the Cysteine persulfide intermediate of the active site.

This sequence belongs to the sulfur carrier protein TusA family.

Its subcellular location is the cytoplasm. Sulfur carrier protein which probably makes part of a sulfur-relay system. In Glaesserella parasuis serovar 5 (strain SH0165) (Haemophilus parasuis), this protein is Sulfur carrier protein TusA.